A 151-amino-acid polypeptide reads, in one-letter code: Deoxyuridine 5'-triphosphate nucleotidohydrolase (151 aa).

Substrate contacts are provided by residues 70–72 (RSG), asparagine 83, and 87–89 (VID).

This sequence belongs to the dUTPase family. It depends on Mg(2+) as a cofactor.

The enzyme catalyses dUTP + H2O = dUMP + diphosphate + H(+). Its pathway is pyrimidine metabolism; dUMP biosynthesis; dUMP from dCTP (dUTP route): step 2/2. Functionally, this enzyme is involved in nucleotide metabolism: it produces dUMP, the immediate precursor of thymidine nucleotides and it decreases the intracellular concentration of dUTP so that uracil cannot be incorporated into DNA. The protein is Deoxyuridine 5'-triphosphate nucleotidohydrolase of Desulfitobacterium hafniense (strain DSM 10664 / DCB-2).